Reading from the N-terminus, the 348-residue chain is Sesquiterpene synthase MGU_11447 (348 aa).

Mg(2+)-binding residues include Asp-91 and Asp-96. The DDXXXD motif signature appears at 91–96 (DDLFVD). Residue Arg-184 coordinates substrate. Residues Asn-230, Ser-234, and Glu-238 each contribute to the Mg(2+) site.

This sequence belongs to the terpene synthase family. It depends on Mg(2+) as a cofactor.

It catalyses the reaction (2E,6E)-farnesyl diphosphate + H2O = (+)-corvol ether B + diphosphate. It carries out the reaction (2E,6E)-farnesyl diphosphate + H2O = (+)-corvol ether A + diphosphate. Terpene synthase that catalyzes the conversion of (2E,6E)-farnesyl diphosphate (FPP) into sesquiterpenes which are important for fungi-environment interactions. Produces a mixture consisting of 8 sesquiterpenes including corvol ethers A and B, as well as traces of epizonarene, gamma-cadinene, delta-cadinene, alpha-cadinene, alpha-cadinol, and an unidentified sesquiterpene. Produces both corvol ether A and corvol ether B in similar concentrations. The protein is Sesquiterpene synthase MGU_11447 of Metarhizium guizhouense (strain ARSEF 977).